A 148-amino-acid chain; its full sequence is Large ribosomal subunit protein bL9 (148 aa).

The protein belongs to the bacterial ribosomal protein bL9 family.

Functionally, binds to the 23S rRNA. In Coprothermobacter proteolyticus (strain ATCC 35245 / DSM 5265 / OCM 4 / BT), this protein is Large ribosomal subunit protein bL9.